The sequence spans 249 residues: tRNA pseudouridine synthase A (249 aa).

The active-site Nucleophile is the Asp53. Residue Tyr111 participates in substrate binding.

This sequence belongs to the tRNA pseudouridine synthase TruA family. As to quaternary structure, homodimer.

The enzyme catalyses uridine(38/39/40) in tRNA = pseudouridine(38/39/40) in tRNA. Functionally, formation of pseudouridine at positions 38, 39 and 40 in the anticodon stem and loop of transfer RNAs. This is tRNA pseudouridine synthase A from Streptococcus pneumoniae serotype 2 (strain D39 / NCTC 7466).